A 154-amino-acid polypeptide reads, in one-letter code: Large-conductance mechanosensitive channel (154 aa).

3 helical membrane-spanning segments follow: residues Val14–Leu34, Ile38–Asn58, and Gly81–Ile101.

The protein belongs to the MscL family. In terms of assembly, homopentamer.

It localises to the cell membrane. Its function is as follows. Channel that opens in response to stretch forces in the membrane lipid bilayer. May participate in the regulation of osmotic pressure changes within the cell. This chain is Large-conductance mechanosensitive channel, found in Brevibacillus brevis (strain 47 / JCM 6285 / NBRC 100599).